The sequence spans 757 residues: MSSKRLSQNEQEKSPGTGPPTHKRRRIGLACNACRMRKSRCDGHRPSCSSCLSLGVNCLYEPGDSTTNVIVRKDYVSDLEQRVASVEHNLQRLNDVLKGHLSPCTGGTDSNNHHNNHDSPCHQPTIAQSITSSRPNTRDKSAANETCATGLEEPDDEDANTNGMAMTFVEEKTSVYYGEASNINFTQLLLRALATVHGATPVAPSASNQASGPGDGVTTDVPQNQHAVSASDLATSESSPTALPSVQEMDSLLDIYFDTAGVVFPFICEDTMRRTYNECRHNGFTRARRTWLGTLNMIFALASCLSSSAKVRFERCNVFYKRAMALCGELSKRVVSLEIVHYLILVVLHCQGTQRSIQAWNNHGLAIRSAMALGLHCQSSGVSLDSAQQEYRRRTWVIIYCLDKVLSTAFGRPASIADEQMHSFNGRESVMGLSPMSLSNPQVPVDLPGDFLSVSFRLYQVMSKSLAEQYGTNLDHVDSGHDDMAPLKASGELRKQLRLWAGSLPGHLHVCQPEDEFLAHNTRGNRLRVILTLRYHNLGILIHKPLLSTTIRHLFQAGNRMEAPPSYMIQLAMAEAHECLRSAQLTIDIVYAVISADPTPENNLGAWYFTLYYVFTASLVVSGRLLWAQHGQSIVDEVAVDHCKSLLSKAEEIFKKLDRKNSLVLSCLEYIARLARICSMKDVPPNHQNGSLDITSDTTNTASGVTDTMPLDEDGMDAFQLFAAEMFDPNIFKGFNLSPVEGVSFTDGIWEGFPCGG.

Positions 1-24 (MSSKRLSQNEQEKSPGTGPPTHKR) are disordered. A DNA-binding region (zn(2)-C6 fungal-type) is located at residues 31–58 (CNACRMRKSRCDGHRPSCSSCLSLGVNC). Disordered stretches follow at residues 106-161 (GGTD…DANT) and 202-222 (VAPSASNQASGPGDGVTTDVP). A compositionally biased stretch (basic and acidic residues) spans 111–120 (NNHHNNHDSP). Residues 125 to 135 (TIAQSITSSRP) are compositionally biased toward polar residues.

It localises to the nucleus. Transcription factor; part of the Fusarium detoxification of benzoxazolinone cluster involved in the degradation of benzoxazolinones produced by the host plant. Maize, wheat, and rye produce the 2 benzoxazinone phytoanticipins 2,4-dihy-droxy-7-methoxy-1,4-benzoxazin-3-one (DIMBOA) and 2,4-dihydroxy-1,4-benzoxazin-3-one (DIBOA) that, due to their inherent instability once released, spontaneously degrade to the more stable corresponding benzoxazolinones, 6-methoxy-2-benzoxazolinone (MBOA) and 2-benzoxazolinone (BOA), respectively. FDB3 controls the transcription of the FDB gene cluster in response to 6-methoxy-2-benzoxazolinone (MBOA). The chain is Transcription factor FBD3 from Fusarium pseudograminearum (strain CS3096) (Wheat and barley crown-rot fungus).